The chain runs to 1078 residues: MRGKKFISLTLSTMLCLQLLPTASFAAAPATDTGNAGLIAEGDYAIAGNGVRVTYDADGQTITLYRTEGSGLIQMSKPSPLGGPVIGGQEVQDFSHISCDVEQSTSGVMGSGQRMTITSQSMSTGLIRTYVLETSDIEEGVVYTATSYEAGASDVEVSWFIGSVYELYGAEDRIWSYNGGGEGPMHYYDTLQKIDLTDSGKFSRENKQDDTAASIPVSDIYIADGGITVGDASATRREVHTPVQETSDSAQVSIGWPGKVIAAGSVIEIGESFAVVHPGDYYNGLRGYKNAMDHLGVIMPAPGDIPDSSYDLRWESWGWGFNWTIDLIIGKLDELQAAGVKQITLDDGWYTNAGDWALNPEKFPNGASDALRLTDAIHEHGMTALLWWRPCDGGIDSILYQQHPEYFVMDADGRPARLPTPGGGTNPSLGYALCPMADGAIASQVDFVNRAMNDWGFDGFKGDYVWSMPECYNPAHNHASPEESTEKQSEIYRVSYEAMVANDPNVFNLLCNCGTPQDYYSLPYMTQIATADPTSVDQTRRRVKAYKALMGDYFPVTADHNNIWYPSAVGTGSVLIEKRDLSGTAKEEYEKWLGIADTVQLQKGRFIGDLYSYGFDPYETYVVEKDGVMYYAFYKDGSKYSPTGYPDIELKGLDPNKMYRIVDYVNDRVVATNLMGDNAVFNTRFSDYLLVKAVEISEPDPEPVDPDYGFTSVDDRDEALIYTGTWHDDNNASFSEGTARYTNSTDASVVFSFTGTSIRWYGQRDTNFGTAEVYLDDELKTTVDANGAAEAGVCLFEALDLPAAEHTIKIVCKSGVIDIDRFAYEAATLEPIYEKVDALSDRITYVGNWEEYHNSEFYMGNAMRTDEAGAYAELTFRGTAVRLYAEMSFNFGTADVYLDGELVENIILYGQEATGQLMFERTGLEEGEHTIRLVQNAWNINLDYISYLPEQDQPTPPETTVTVDAMDAQLVYTGVWNDDYHDVFQEGTARYASSAGASVEFEFTGSEIRWYGQNDSNFGVASVYIDNEFVQQVNVNGAAAVGKLLFQKADLPAGSHTIRIVCDTPVIDLDYLTYTTNA.

A signal peptide spans 1 to 26; that stretch reads MRGKKFISLTLSTMLCLQLLPTASFA. The glycoside hydrolase 36 domain stretch occupies residues 306-570; the sequence is PDSSYDLRWE…NNIWYPSAVG (265 aa). The active-site Nucleophile is the Asp-463. Asp-532 is a catalytic residue. The not required for activity on soluble substrates stretch occupies residues 699–1078; that stretch reads PDPEPVDPDY…LDYLTYTTNA (380 aa).

This sequence belongs to the glycosyl hydrolase 36 family.

It catalyses the reaction an alpha-D-galactosaminyl-(1-&gt;3)-[alpha-L-fucosyl-(1-&gt;2)]-beta-D-galactosyl derivative + H2O = D-galactosamine + an alpha-L-fucosyl-(1-&gt;2)-beta-D-galactosyl derivative. One of an enzyme pair that work together to convert the A antigen to the H antigen of the O blood type, which together release galactosamine. Catalyzes the second step in the conversion, acts on the product of the first reaction (FpGalNAcDeAc, AC P0DTR4). Is specific for galactosamine containing sugars, does not cleave GalNAc residues. The polypeptide is A type blood alpha-D-galactosamine galactosaminidase (Flavonifractor plautii (Fusobacterium plautii)).